The chain runs to 80 residues: RNA-binding protein Hfq (80 aa).

The 61-residue stretch at 7-67 folds into the Sm domain; that stretch reads ESFLNTARKK…ITTIVPHERL (61 aa).

This sequence belongs to the Hfq family. In terms of assembly, homohexamer.

Its function is as follows. RNA chaperone that binds small regulatory RNA (sRNAs) and mRNAs to facilitate mRNA translational regulation in response to envelope stress, environmental stress and changes in metabolite concentrations. Also binds with high specificity to tRNAs. In Aquifex aeolicus (strain VF5), this protein is RNA-binding protein Hfq.